A 347-amino-acid polypeptide reads, in one-letter code: UDP-galactose/UDP-glucose transporter 5 (347 aa).

Transmembrane regions (helical) follow at residues 17-37, 57-77, 116-136, 143-163, 177-197, 218-238, 247-267, and 293-313; these read LWKAVFAISGIMLTLVIYGLL, LFLVFCNRLTTSAVSAAALLA, VQTLAKCAKMIPVMVWGTLIM, FDYLVAFLVTLGCSVFILFPA, TVWGVSLMVGYLGFDGFTSTF, ICSSILSFTGLILQGHLLPAV, CLFDIALLSTVATASQFFISY, and CIWFSHPLSWEQCIGSVIVFG. A disordered region spans residues 325-347; sequence SEKPPAAQELPRDEEAQPLKGNP.

The protein belongs to the nucleotide-sugar transporter family. UDP-galactose:UMP antiporter (TC 2.A.7.11) subfamily.

The protein resides in the membrane. In terms of biological role, sugar transporter involved in the transport of nucleotide-sugars from cytoplasm into the Golgi and/or the endoplasmic reticulum. The chain is UDP-galactose/UDP-glucose transporter 5 from Arabidopsis thaliana (Mouse-ear cress).